The primary structure comprises 677 residues: Beta-galactosidase (677 aa).

An N-terminal signal peptide occupies residues 1–23 (MPGFLVRILPLLLALLLLGPTRG). The propeptide occupies 24 to 28 (LRNAT). N-linked (GlcNAc...) asparagine glycosylation is present at Asn26. Substrate is bound by residues Tyr83, Glu129, and Asn187. Glu188 functions as the Proton donor in the catalytic mechanism. The cysteines at positions 195 and 230 are disulfide-linked. Asn247 carries an N-linked (GlcNAc...) asparagine glycan. Glu268 functions as the Nucleophile in the catalytic mechanism. Tyr333 contributes to the substrate binding site. Asn464, Asn498, Asn545, and Asn555 each carry an N-linked (GlcNAc...) asparagine glycan. An intrachain disulfide couples Cys626 to Cys634. Positions 654-677 (SKPVEKKLMPSPPQKNKDSWLDHV) are disordered. Residues 668–677 (KNKDSWLDHV) show a composition bias toward basic and acidic residues.

Belongs to the glycosyl hydrolase 35 family. Homodimer. May form higher multimers.

It is found in the lysosome. It carries out the reaction Hydrolysis of terminal non-reducing beta-D-galactose residues in beta-D-galactosides.. Cleaves beta-linked terminal galactosyl residues from gangliosides, glycoproteins, and glycosaminoglycans. The protein is Beta-galactosidase (GLB1) of Pongo abelii (Sumatran orangutan).